Consider the following 86-residue polypeptide: Large ribosomal subunit protein bL31B (86 aa).

The protein belongs to the bacterial ribosomal protein bL31 family. Type B subfamily. Part of the 50S ribosomal subunit.

This chain is Large ribosomal subunit protein bL31B, found in Cupriavidus metallidurans (strain ATCC 43123 / DSM 2839 / NBRC 102507 / CH34) (Ralstonia metallidurans).